The following is a 387-amino-acid chain: Large ribosomal subunit protein uL3 (387 aa).

It belongs to the universal ribosomal protein uL3 family.

It localises to the cytoplasm. The polypeptide is Large ribosomal subunit protein uL3 (RPL3) (Kluyveromyces lactis (strain ATCC 8585 / CBS 2359 / DSM 70799 / NBRC 1267 / NRRL Y-1140 / WM37) (Yeast)).